A 303-amino-acid polypeptide reads, in one-letter code: Lipoyl synthase (303 aa).

7 residues coordinate [4Fe-4S] cluster: Cys-35, Cys-40, Cys-46, Cys-61, Cys-65, Cys-68, and Ser-273. In terms of domain architecture, Radical SAM core spans 47–262 (FRERQATFLI…KELAEKMGFR (216 aa)).

Belongs to the radical SAM superfamily. Lipoyl synthase family. [4Fe-4S] cluster is required as a cofactor.

The protein localises to the cytoplasm. It catalyses the reaction [[Fe-S] cluster scaffold protein carrying a second [4Fe-4S](2+) cluster] + N(6)-octanoyl-L-lysyl-[protein] + 2 oxidized [2Fe-2S]-[ferredoxin] + 2 S-adenosyl-L-methionine + 4 H(+) = [[Fe-S] cluster scaffold protein] + N(6)-[(R)-dihydrolipoyl]-L-lysyl-[protein] + 4 Fe(3+) + 2 hydrogen sulfide + 2 5'-deoxyadenosine + 2 L-methionine + 2 reduced [2Fe-2S]-[ferredoxin]. It functions in the pathway protein modification; protein lipoylation via endogenous pathway; protein N(6)-(lipoyl)lysine from octanoyl-[acyl-carrier-protein]: step 2/2. Catalyzes the radical-mediated insertion of two sulfur atoms into the C-6 and C-8 positions of the octanoyl moiety bound to the lipoyl domains of lipoate-dependent enzymes, thereby converting the octanoylated domains into lipoylated derivatives. This chain is Lipoyl synthase, found in Geobacter sulfurreducens (strain ATCC 51573 / DSM 12127 / PCA).